Consider the following 334-residue polypeptide: Aspartate carbamoyltransferase catalytic subunit (334 aa).

Positions 71 and 72 each coordinate carbamoyl phosphate. Residue Lys99 participates in L-aspartate binding. 3 residues coordinate carbamoyl phosphate: Arg121, His151, and Gln154. L-aspartate is bound by residues Arg184 and Arg239. Carbamoyl phosphate contacts are provided by Gly280 and Pro281.

This sequence belongs to the aspartate/ornithine carbamoyltransferase superfamily. ATCase family. Heterododecamer (2C3:3R2) of six catalytic PyrB chains organized as two trimers (C3), and six regulatory PyrI chains organized as three dimers (R2).

The enzyme catalyses carbamoyl phosphate + L-aspartate = N-carbamoyl-L-aspartate + phosphate + H(+). Its pathway is pyrimidine metabolism; UMP biosynthesis via de novo pathway; (S)-dihydroorotate from bicarbonate: step 2/3. Catalyzes the condensation of carbamoyl phosphate and aspartate to form carbamoyl aspartate and inorganic phosphate, the committed step in the de novo pyrimidine nucleotide biosynthesis pathway. The sequence is that of Aspartate carbamoyltransferase catalytic subunit from Pseudomonas syringae pv. tomato (strain ATCC BAA-871 / DC3000).